A 591-amino-acid chain; its full sequence is L-fucose isomerase (591 aa).

Active-site proton acceptor residues include E337 and D361. Mn(2+) contacts are provided by E337, D361, and H528.

Belongs to the L-fucose isomerase family. As to quaternary structure, homohexamer. It depends on Mn(2+) as a cofactor.

Its subcellular location is the cytoplasm. The enzyme catalyses L-fucose = L-fuculose. It participates in carbohydrate degradation; L-fucose degradation; L-lactaldehyde and glycerone phosphate from L-fucose: step 1/3. Functionally, converts the aldose L-fucose into the corresponding ketose L-fuculose. In Citrobacter koseri (strain ATCC BAA-895 / CDC 4225-83 / SGSC4696), this protein is L-fucose isomerase.